A 36-amino-acid chain; its full sequence is Collagen alpha-2(I) chain (36 aa).

The tract at residues 1 to 36 (GSNGEPGSAGPPGPAGLRGLPGESGAVGPAGPPGSR) is disordered. Residues proline 6 and proline 12 each carry the 4-hydroxyproline modification. Over residues 15–29 (AGLRGLPGESGAVGP) the composition is skewed to low complexity. Proline 33 carries the post-translational modification 4-hydroxyproline.

It belongs to the fibrillar collagen family. In terms of assembly, trimers of one alpha 2(I) and two alpha 1(I) chains. Post-translationally, proline residues at the third position of the tripeptide repeating unit (G-X-Y) are hydroxylated in some or all of the chains.

Its subcellular location is the secreted. It is found in the extracellular space. The protein localises to the extracellular matrix. In terms of biological role, type I collagen is a member of group I collagen (fibrillar forming collagen). This is Collagen alpha-2(I) chain from Brachylophosaurus canadensis (Campanian hadrosaur).